The chain runs to 88 residues: Transcription factor ILI5 (88 aa).

The region spanning 1–54 (MSSRRSSRGSISEEEINELISKLQSLLPNSRRRGSSQASTTKLLKETCNYIKSL) is the bHLH domain.

The protein belongs to the bHLH protein family. As to quaternary structure, interacts with APG.

It localises to the nucleus. Functionally, atypical and probable non DNA-binding bHLH transcription factor that acts as a positive regulator of grain size. Binds the transcription repressor APG and forms a heterodimer of antagonistic basic helix-loop-helix transcription factors that regulates grain length and weight by controlling cell elongation in lemma and palea. The protein is Transcription factor ILI5 (ILI5) of Oryza sativa subsp. indica (Rice).